The sequence spans 219 residues: uncharacterized protein (219 aa).

D58 is a catalytic residue.

This sequence belongs to the pseudouridine synthase RluA family.

It catalyses the reaction a uridine in RNA = a pseudouridine in RNA. This is an uncharacterized protein from Zymomonas mobilis subsp. mobilis (strain ATCC 31821 / ZM4 / CP4).